The sequence spans 236 residues: Lipoprotein signal peptidase (236 aa).

The next 4 membrane-spanning stretches (helical) occupy residues 8–28 (FYGI…WVYF), 44–64 (WFKL…FGFT), 68–88 (VLLT…IWNL), and 98–118 (LLWG…DSIF). Residues D141 and D174 contribute to the active site. A helical membrane pass occupies residues 166–186 (CLPVFNLADVAILAGVALIVL).

This sequence belongs to the peptidase A8 family.

It localises to the cell inner membrane. It carries out the reaction Release of signal peptides from bacterial membrane prolipoproteins. Hydrolyzes -Xaa-Yaa-Zaa-|-(S,diacylglyceryl)Cys-, in which Xaa is hydrophobic (preferably Leu), and Yaa (Ala or Ser) and Zaa (Gly or Ala) have small, neutral side chains.. Its pathway is protein modification; lipoprotein biosynthesis (signal peptide cleavage). Its function is as follows. This protein specifically catalyzes the removal of signal peptides from prolipoproteins. The polypeptide is Lipoprotein signal peptidase (Amoebophilus asiaticus (strain 5a2)).